A 270-amino-acid polypeptide reads, in one-letter code: S-adenosylmethionine decarboxylase proenzyme (270 aa).

The active-site Schiff-base intermediate with substrate; via pyruvic acid is the Ser-120. Ser-120 carries the post-translational modification Pyruvic acid (Ser); by autocatalysis. Catalysis depends on His-125, which acts as the Proton acceptor; for processing activity. Cys-148 serves as the catalytic Proton donor; for catalytic activity.

Belongs to the prokaryotic AdoMetDC family. Type 2 subfamily. In terms of assembly, heterooctamer of four alpha and four beta chains arranged as a tetramer of alpha/beta heterodimers. Pyruvate serves as cofactor. Post-translationally, is synthesized initially as an inactive proenzyme. Formation of the active enzyme involves a self-maturation process in which the active site pyruvoyl group is generated from an internal serine residue via an autocatalytic post-translational modification. Two non-identical subunits are generated from the proenzyme in this reaction, and the pyruvate is formed at the N-terminus of the alpha chain, which is derived from the carboxyl end of the proenzyme. The post-translation cleavage follows an unusual pathway, termed non-hydrolytic serinolysis, in which the side chain hydroxyl group of the serine supplies its oxygen atom to form the C-terminus of the beta chain, while the remainder of the serine residue undergoes an oxidative deamination to produce ammonia and the pyruvoyl group blocking the N-terminus of the alpha chain.

The enzyme catalyses S-adenosyl-L-methionine + H(+) = S-adenosyl 3-(methylsulfanyl)propylamine + CO2. Its pathway is amine and polyamine biosynthesis; S-adenosylmethioninamine biosynthesis; S-adenosylmethioninamine from S-adenosyl-L-methionine: step 1/1. In terms of biological role, catalyzes the decarboxylation of S-adenosylmethionine to S-adenosylmethioninamine (dcAdoMet), the propylamine donor required for the synthesis of the polyamines spermine and spermidine from the diamine putrescine. This Alkaliphilus oremlandii (strain OhILAs) (Clostridium oremlandii (strain OhILAs)) protein is S-adenosylmethionine decarboxylase proenzyme.